Reading from the N-terminus, the 436-residue chain is Transcriptional regulator VdtR (436 aa).

Positions 17–44 (CDRCSANKVKCTQEKPECERCRLLSLPC) form a DNA-binding region, zn(2)-C6 fungal-type. Disordered stretches follow at residues 51-147 (RIGK…HDKG) and 173-192 (TARE…EYSD). Positions 125–141 (SHNSNRPTNMASTNQDQ) are enriched in polar residues. Residues 174 to 192 (AREDQKQHPELRSEEEYSD) show a composition bias toward basic and acidic residues.

It localises to the nucleus. Functionally, transcription factor that regulates expression of the viriditoxin biosynthesis cluster and viriditoxin synthesis. This chain is Transcriptional regulator VdtR, found in Byssochlamys spectabilis (Paecilomyces variotii).